A 612-amino-acid chain; its full sequence is Amyloid-beta precursor-like protein (612 aa).

The N-terminal stretch at 1–21 (MGPSVRPGFLVVVIGLQFVAA) is a signal peptide. Over 22-542 (SMEVNSRKFE…NLYANSHANS (521 aa)) the chain is Extracellular. The tract at residues 28–122 (RKFEPMVAFI…PFRCLVGPFQ (95 aa)) is GFLD subdomain. In terms of domain architecture, E1 spans 28-189 (RKFEPMVAFI…SGVEFVCCPK (162 aa)). 6 disulfides stabilise this stretch: C38–C60, C71–C116, C96–C103, C132–C187, C143–C173, and C157–C186. N-linked (GlcNAc...) asparagine glycans are attached at residues N99, N108, and N150. A cuBD subdomain region spans residues 130–189 (EHCIFDHYHDPRVCNEFDQCNETAMSKCSARGMTTQSFAMLWPCQEPGHFSGVEFVCCPK). One can recognise an E2 domain in the interval 223-419 (GDSKYMSKYA…KQVRPNIDKF (197 aa)). Disordered regions lie at residues 251-276 (ERDTKMMKDWKAARDSVREKKKTDPK) and 437-490 (QEPT…FDSE). Basic and acidic residues-rich tracts occupy residues 439–453 (PTPKEAPVETQKAED) and 470–483 (KPTEARPEQQEDIK). A helical transmembrane segment spans residues 543-563 (VLGIAIGGVVVFIIIVVAVVM). At 564–612 (LKRRTQRQRVTHGFVEVDPAASPEERHVANMQMSGYENPTYKYFEMQNQ) the chain is on the cytoplasmic side. Positions 598–612 (GYENPTYKYFEMQNQ) are required for the interaction with kinesin heavy chain and for anterograde transport in axons. The YENPXY motif motif lies at 599 to 604 (YENPTY).

This sequence belongs to the APP family. As to quaternary structure, interacts (via cytoplasmic domain) with kinesin heavy chain. As to expression, expressed in the cervicothoracic ganglion (stellate ganglion) (at protein level).

Its subcellular location is the cell membrane. It is found in the cell projection. The protein localises to the axon. In terms of biological role, acts as a kinesin I membrane receptor, thereby playing a role in axonal anterograde transport of cargo towards synapses in axons. This Doryteuthis pealeii (Longfin inshore squid) protein is Amyloid-beta precursor-like protein.